The following is a 351-amino-acid chain: Homeobox protein rough sheath 1 (351 aa).

Disordered regions lie at residues Met1–Ala23, Ala57–Met82, and Gly187–Glu229. Positions Ala57–Gln68 are enriched in low complexity. The span at Pro214 to Glu229 shows a compositional bias: basic and acidic residues. The region spanning Glu232–Phe252 is the ELK domain. The segment at residues Ser253–Ser316 is a DNA-binding region (homeobox; TALE-type).

Belongs to the TALE/KNOX homeobox family.

The protein resides in the nucleus. Plays a possible role in patterning the placement of lateral organs along the axis of the shoot. Mutations in RS1 alters cell fate and causes unregulated cell division and expansion in the leaf. Probably binds to the DNA sequence 5'-TGAC-3'. The chain is Homeobox protein rough sheath 1 (RS1) from Zea mays (Maize).